The primary structure comprises 291 residues: Probable cell wall amidase LytH (291 aa).

Residues 1-40 form the signal peptide; it reads MKKIDSWLTKHGLKNRLTLVVIVIFIIFLILLFMFVNLSD. The region spanning 41–105 is the SH3b domain; sequence EDTGQITITE…WVAGWHTNLN (65 aa). In terms of domain architecture, MurNAc-LAA spans 122-286; it reads IVLDPGHGGS…VEQAIVDGLK (165 aa). Positions 123–147 are disordered; that stretch reads VLDPGHGGSDQGASSSTPSKSLEKN. The segment covering 133–142 has biased composition (polar residues); the sequence is QGASSSTPSK.

The protein belongs to the N-acetylmuramoyl-L-alanine amidase 3 family.

The protein resides in the secreted. Probably involved in cell-wall metabolism. The chain is Probable cell wall amidase LytH (lytH) from Staphylococcus epidermidis (strain ATCC 12228 / FDA PCI 1200).